Here is a 314-residue protein sequence, read N- to C-terminus: Acetaldehyde dehydrogenase 1 (314 aa).

NAD(+) is bound at residue 16-19 (SGNI). Catalysis depends on cysteine 134, which acts as the Acyl-thioester intermediate. Residues 165–173 (SAGPGTRAN) and asparagine 292 each bind NAD(+).

This sequence belongs to the acetaldehyde dehydrogenase family.

It carries out the reaction acetaldehyde + NAD(+) + CoA = acetyl-CoA + NADH + H(+). This chain is Acetaldehyde dehydrogenase 1 (mhpF), found in Cupriavidus necator (strain ATCC 17699 / DSM 428 / KCTC 22496 / NCIMB 10442 / H16 / Stanier 337) (Ralstonia eutropha).